The sequence spans 177 residues: Large ribosomal subunit protein uL6 (177 aa).

Belongs to the universal ribosomal protein uL6 family. Part of the 50S ribosomal subunit.

Functionally, this protein binds to the 23S rRNA, and is important in its secondary structure. It is located near the subunit interface in the base of the L7/L12 stalk, and near the tRNA binding site of the peptidyltransferase center. The polypeptide is Large ribosomal subunit protein uL6 (Shewanella baltica (strain OS223)).